Consider the following 762-residue polypeptide: Phosphoribosylformylglycinamidine synthase subunit PurL (762 aa).

His-58 is a catalytic residue. 2 residues coordinate ATP: Tyr-61 and Arg-105. Position 107 (Glu-107) interacts with Mg(2+). Residues 108–111 and Arg-130 contribute to the substrate site; that span reads SHNH. The Proton acceptor role is filled by His-109. Residue Asp-131 participates in Mg(2+) binding. Substrate is bound at residue Gln-255. Asp-283 serves as a coordination point for Mg(2+). 327–329 contributes to the substrate binding site; it reads ESQ. Positions 513 and 550 each coordinate ATP. Asn-551 provides a ligand contact to Mg(2+). Ser-553 lines the substrate pocket.

Belongs to the FGAMS family. In terms of assembly, monomer. Part of the FGAM synthase complex composed of 1 PurL, 1 PurQ and 2 PurS subunits.

The protein resides in the cytoplasm. It carries out the reaction N(2)-formyl-N(1)-(5-phospho-beta-D-ribosyl)glycinamide + L-glutamine + ATP + H2O = 2-formamido-N(1)-(5-O-phospho-beta-D-ribosyl)acetamidine + L-glutamate + ADP + phosphate + H(+). It functions in the pathway purine metabolism; IMP biosynthesis via de novo pathway; 5-amino-1-(5-phospho-D-ribosyl)imidazole from N(2)-formyl-N(1)-(5-phospho-D-ribosyl)glycinamide: step 1/2. Functionally, part of the phosphoribosylformylglycinamidine synthase complex involved in the purines biosynthetic pathway. Catalyzes the ATP-dependent conversion of formylglycinamide ribonucleotide (FGAR) and glutamine to yield formylglycinamidine ribonucleotide (FGAM) and glutamate. The FGAM synthase complex is composed of three subunits. PurQ produces an ammonia molecule by converting glutamine to glutamate. PurL transfers the ammonia molecule to FGAR to form FGAM in an ATP-dependent manner. PurS interacts with PurQ and PurL and is thought to assist in the transfer of the ammonia molecule from PurQ to PurL. The polypeptide is Phosphoribosylformylglycinamidine synthase subunit PurL (Corynebacterium glutamicum (strain ATCC 13032 / DSM 20300 / JCM 1318 / BCRC 11384 / CCUG 27702 / LMG 3730 / NBRC 12168 / NCIMB 10025 / NRRL B-2784 / 534)).